The sequence spans 330 residues: Aspartate--ammonia ligase (330 aa).

The protein belongs to the class-II aminoacyl-tRNA synthetase family. AsnA subfamily.

It is found in the cytoplasm. The catalysed reaction is L-aspartate + NH4(+) + ATP = L-asparagine + AMP + diphosphate + H(+). It functions in the pathway amino-acid biosynthesis; L-asparagine biosynthesis; L-asparagine from L-aspartate (ammonia route): step 1/1. The sequence is that of Aspartate--ammonia ligase from Streptococcus pyogenes serotype M3 (strain ATCC BAA-595 / MGAS315).